The sequence spans 352 residues: Selenide, water dikinase (352 aa).

Cys23 is a catalytic residue. ATP-binding positions include Lys26 and 54–56 (SRD). Asp57 provides a ligand contact to Mg(2+). Residues Asp74, Asp97, and 145 to 147 (GHS) contribute to the ATP site. Asp97 lines the Mg(2+) pocket. Asp233 provides a ligand contact to Mg(2+).

The protein belongs to the selenophosphate synthase 1 family. Class I subfamily. As to quaternary structure, homodimer. Mg(2+) serves as cofactor.

The catalysed reaction is hydrogenselenide + ATP + H2O = selenophosphate + AMP + phosphate + 2 H(+). Synthesizes selenophosphate from selenide and ATP. This Shewanella baltica (strain OS155 / ATCC BAA-1091) protein is Selenide, water dikinase.